The following is a 162-amino-acid chain: Lipid droplet assembly factor 1-A (162 aa).

The Cytoplasmic portion of the chain corresponds to 1–42 (MASAENLYQEKMQELQKQMNKVMQTINNHSKVEAFLNSPFGQ). The chain crosses the membrane as a helical span at residues 43-63 (YLDQHPFVTLSLLVFISLSAV). Residues 64–65 (PV) lie on the Lumenal side of the membrane. The chain crosses the membrane as a helical span at residues 66–86 (GIFLTLIAGTAIAVCLAVLII). Position 87 (Glu-87) is a topological domain, cytoplasmic. Residues 88 to 108 (GIVISVGGIALLCILCGLAVM) form a helical membrane-spanning segment. Position 109 (Ser-109) is a topological domain, lumenal. A helical membrane pass occupies residues 110-130 (LGVAAVLCVSYVAGSSVLNYI). At 131-162 (HAYRVTVGTRGRSGPISLNHETTTAEKSYRSS) the chain is on the cytoplasmic side.

It belongs to the LDAF1 family.

The protein localises to the endoplasmic reticulum membrane. It is found in the lipid droplet. Functionally, plays an important role in the formation of lipid droplets (LD) which are storage organelles at the center of lipid and energy homeostasis. This is Lipid droplet assembly factor 1-A from Xenopus laevis (African clawed frog).